The following is a 323-amino-acid chain: Sphingolipid delta(4)-desaturase DES1 (323 aa).

Gly2 carries the N-myristoyl glycine lipid modification. A run of 2 helical transmembrane segments spans residues 41-61 (PNLI…FYIV) and 68-88 (WVIF…TLAI). A Histidine box-1 motif is present at residues 89–93 (HEIAH). Residues 102 to 122 (AMWNRWFGMFANLPIGIPYSI) traverse the membrane as a helical segment. A Histidine box-2 motif is present at residues 128 to 132 (HMDHH). A run of 3 helical transmembrane segments spans residues 152–172 (FFCT…FYAF), 184–204 (YLEV…YYFL), and 209–229 (LVYM…SGHF). The Histidine box-3 signature appears at 259-263 (HNEHH). Ser307 carries the post-translational modification Phosphoserine.

This sequence belongs to the fatty acid desaturase type 1 family. DEGS subfamily. As to quaternary structure, interacts with RLBP1; the interaction increases synthesis of chromophore-precursors by DEGS1. Myristoylation can target the enzyme to the mitochondria leading to an increase in ceramide levels. Ubiquitous.

It is found in the mitochondrion membrane. Its subcellular location is the endoplasmic reticulum membrane. It carries out the reaction an N-acylsphinganine + 2 Fe(II)-[cytochrome b5] + O2 + 2 H(+) = an N-acylsphing-4-enine + 2 Fe(III)-[cytochrome b5] + 2 H2O. It catalyses the reaction all-trans-retinol = 11-cis-retinol. The catalysed reaction is all-trans-retinol = 9-cis-retinol. The enzyme catalyses all-trans-retinol = 13-cis-retinol. It carries out the reaction 11-cis-retinol = 13-cis-retinol. It catalyses the reaction 11-cis-retinol = 9-cis-retinol. Its function is as follows. Has sphingolipid-delta-4-desaturase activity. Converts D-erythro-sphinganine to D-erythro-sphingosine (E-sphing-4-enine). Catalyzes the equilibrium isomerization of retinols. The sequence is that of Sphingolipid delta(4)-desaturase DES1 from Homo sapiens (Human).